The chain runs to 208 residues: MSKVLFVKANDRPAEQAVSSKMYETFVSTYKEANPNTEITELDLFALDLPYYGNIAISGGYKRSQGMELTAEEEKAVATVDQYLNQFLEADKVVFAFPLWNFTVPAPLITYISYLSQAGKTFKYTANGPEGLVGGKKVVVLGARGSDYSSEQMAPMEMAVNYVTTVLGFWGITNPETVVIEGHNQYPDRSQQIVEEGLENVKKVAAKF.

Belongs to the azoreductase type 1 family. In terms of assembly, homodimer. FMN is required as a cofactor.

It catalyses the reaction 2 a quinone + NADH + H(+) = 2 a 1,4-benzosemiquinone + NAD(+). It carries out the reaction N,N-dimethyl-1,4-phenylenediamine + anthranilate + 2 NAD(+) = 2-(4-dimethylaminophenyl)diazenylbenzoate + 2 NADH + 2 H(+). Its function is as follows. Quinone reductase that provides resistance to thiol-specific stress caused by electrophilic quinones. Also exhibits azoreductase activity. Catalyzes the reductive cleavage of the azo bond in aromatic azo compounds to the corresponding amines. The sequence is that of FMN-dependent NADH:quinone oxidoreductase 1 from Bacillus cereus (strain ATCC 14579 / DSM 31 / CCUG 7414 / JCM 2152 / NBRC 15305 / NCIMB 9373 / NCTC 2599 / NRRL B-3711).